The primary structure comprises 193 residues: Molybdopterin synthase catalytic subunit (193 aa).

Substrate contacts are provided by residues 118-119 (HR), Lys-134, and 141-143 (KKE). The segment at 159-193 (DRTTTDGTTASSPAPATRPAKGGGCCGSKVRANES) is disordered. Residues 163-178 (TDGTTASSPAPATRPA) are compositionally biased toward low complexity.

Belongs to the MoaE family. MOCS2B subfamily. Heterotetramer; composed of 2 small (MOCS2A) and 2 large (MOCS2B) subunits.

The protein localises to the cytoplasm. It catalyses the reaction 2 [molybdopterin-synthase sulfur-carrier protein]-C-terminal-Gly-aminoethanethioate + cyclic pyranopterin phosphate + H2O = molybdopterin + 2 [molybdopterin-synthase sulfur-carrier protein]-C-terminal Gly-Gly + 2 H(+). It participates in cofactor biosynthesis; molybdopterin biosynthesis. Catalytic subunit of the molybdopterin synthase complex, a complex that catalyzes the conversion of precursor Z into molybdopterin. Acts by mediating the incorporation of 2 sulfur atoms from thiocarboxylated MOCS2A into precursor Z to generate a dithiolene group. The chain is Molybdopterin synthase catalytic subunit from Oryza sativa subsp. indica (Rice).